The following is a 340-amino-acid chain: Ketol-acid reductoisomerase (NADP(+)) (340 aa).

In terms of domain architecture, KARI N-terminal Rossmann spans 5-182 (MEYEKDVKVA…GSARVGLLET (178 aa)). Residues 26 to 29 (YGSQ), arginine 49, serine 53, and 83 to 86 (DEIQ) contribute to the NADP(+) site. Histidine 108 is an active-site residue. Residue glycine 134 coordinates NADP(+). One can recognise a KARI C-terminal knotted domain in the interval 183-328 (TYKEETEEDL…AELRKAMPFV (146 aa)). Mg(2+)-binding residues include aspartate 191, glutamate 195, glutamate 227, and glutamate 231. Serine 252 is a substrate binding site.

Belongs to the ketol-acid reductoisomerase family. Requires Mg(2+) as cofactor.

The enzyme catalyses (2R)-2,3-dihydroxy-3-methylbutanoate + NADP(+) = (2S)-2-acetolactate + NADPH + H(+). It catalyses the reaction (2R,3R)-2,3-dihydroxy-3-methylpentanoate + NADP(+) = (S)-2-ethyl-2-hydroxy-3-oxobutanoate + NADPH + H(+). It functions in the pathway amino-acid biosynthesis; L-isoleucine biosynthesis; L-isoleucine from 2-oxobutanoate: step 2/4. It participates in amino-acid biosynthesis; L-valine biosynthesis; L-valine from pyruvate: step 2/4. Its function is as follows. Involved in the biosynthesis of branched-chain amino acids (BCAA). Catalyzes an alkyl-migration followed by a ketol-acid reduction of (S)-2-acetolactate (S2AL) to yield (R)-2,3-dihydroxy-isovalerate. In the isomerase reaction, S2AL is rearranged via a Mg-dependent methyl migration to produce 3-hydroxy-3-methyl-2-ketobutyrate (HMKB). In the reductase reaction, this 2-ketoacid undergoes a metal-dependent reduction by NADPH to yield (R)-2,3-dihydroxy-isovalerate. The chain is Ketol-acid reductoisomerase (NADP(+)) from Streptococcus sanguinis (strain SK36).